Here is a 125-residue protein sequence, read N- to C-terminus: Oxytocin-neurophysin 1 (125 aa).

A signal peptide spans 1-19 (MAGPSLACCLLGLLALTSA). C20 and C25 are joined by a disulfide. Glycine amide is present on G28. Intrachain disulfides connect C41–C85, C44–C58, C52–C75, C59–C65, C92–C104, C98–C116, and C105–C110.

Belongs to the vasopressin/oxytocin family. In terms of assembly, interacts with oxytocin receptor (Ki=1.5 nM). Interacts with vasopressin V1aR/AVPR1A (Ki=37 nM), V1bR/AVPR1B (Ki=222 nM), and V2R/AVPR2 receptors (Ki=823 nM).

Neurophysin 1 specifically binds oxytocin. In terms of biological role, oxytocin causes contraction of the smooth muscle of the uterus and of the mammary gland. Acts by binding to oxytocin receptor (OXTR). The protein is Oxytocin-neurophysin 1 (OXT) of Sus scrofa (Pig).